The following is a 942-amino-acid chain: Diacylglycerol kinase theta (942 aa).

A disordered region spans residues 1 to 59 (MAAAAEPGARAWLGGGSPRPGSPACSPVLGSGGRARPGPGPGPGPERAGVRAPGPAAAP). Residues serine 22 and serine 26 each carry the phosphoserine modification. The segment covering 45 to 59 (PERAGVRAPGPAAAP) has biased composition (low complexity). 3 consecutive Phorbol-ester/DAG-type zinc fingers follow at residues 60-108 (GHSF…RIPC), 121-168 (AHCF…CSDC), and 183-234 (HHHW…APEC). Residues 269-295 (EPGEGGDGADGSAAVGPGRETQATPES) are disordered. Residues 395 to 494 (AQEVLKIYPG…TRFYVAESRD (100 aa)) enclose the Ras-associating domain. 2 short sequence motifs (LXXLL motif) span residues 555–559 (LYMLL) and 574–578 (LPDLL). The 138-residue stretch at 584–721 (PDSCPLLVFV…MDRWTILLDA (138 aa)) folds into the DAGKc domain. The segment at 908–942 (PKVHMLRKAKQKPRRAGTTRDARADAAPAPESDPR) is disordered. Residues 911–924 (HMLRKAKQKPRRAG) are compositionally biased toward basic residues. A compositionally biased stretch (low complexity) spans 932–942 (DAAPAPESDPR).

The protein belongs to the eukaryotic diacylglycerol kinase family. In terms of assembly, interacts with RHOA (constitutively activated, GTP-bound); the interaction inhibits DGKQ. Interacts with PRKCE. Interacts with PRKCH. Interacts with PLCB1. Interacts with NR5A1; the interaction requires both LXXLL motifs in DGKQ and is required for full phosphatidic acid-mediated activation of NR5A1. In terms of processing, phosphorylated by PRKCE and PRKCH in vitro.

The protein resides in the cytoplasm. It is found in the cytosol. The protein localises to the cell membrane. It localises to the synapse. Its subcellular location is the cytoskeleton. The protein resides in the nucleus. It is found in the nucleus speckle. The protein localises to the nucleus matrix. The catalysed reaction is a 1,2-diacyl-sn-glycerol + ATP = a 1,2-diacyl-sn-glycero-3-phosphate + ADP + H(+). It carries out the reaction a 1-O-alkyl-sn-glycerol + ATP = a 1-O-alkyl-sn-glycero-3-phosphate + ADP + H(+). The enzyme catalyses 1-O-alkyl-2-acyl-sn-glycerol + ATP = 1-O-alkyl-2-acyl-sn-glycero-3-phosphate + ADP + H(+). It catalyses the reaction 1,2-di-(9Z-octadecenoyl)-sn-glycerol + ATP = 1,2-di-(9Z-octadecenoyl)-sn-glycero-3-phosphate + ADP + H(+). The catalysed reaction is 1-O-hexadecyl-sn-glycerol + ATP = 1-O-hexadecyl-sn-glycero-3-phosphate + ADP + H(+). It carries out the reaction 1-O-hexadecyl-2-acetyl-sn-glycerol + ATP = 1-O-hexadecyl-2-acetyl-sn-glycero-3-phosphate + ADP + H(+). The enzyme catalyses 1-octadecanoyl-2-(5Z,8Z,11Z,14Z-eicosatetraenoyl)-sn-glycerol + ATP = 1-octadecanoyl-2-(5Z,8Z,11Z,14Z-eicosatetraenoyl)-sn-glycero-3-phosphate + ADP + H(+). Its pathway is lipid metabolism; glycerolipid metabolism. With respect to regulation, activated by phosphatidylserine. Diacylglycerol kinase that converts diacylglycerol/DAG into phosphatidic acid/phosphatidate/PA and regulates the respective levels of these two bioactive lipids. Thereby, acts as a central switch between the signaling pathways activated by these second messengers with different cellular targets and opposite effects in numerous biological processes. Within the adrenocorticotropic hormone signaling pathway, produces phosphatidic acid which in turn activates NR5A1 and subsequent steroidogenic gene transcription. Also functions downstream of the nerve growth factor signaling pathway being specifically activated in the nucleus by the growth factor. Through its diacylglycerol activity also regulates synaptic vesicle endocytosis. The sequence is that of Diacylglycerol kinase theta from Homo sapiens (Human).